A 224-amino-acid chain; its full sequence is MLIEIPNVFSKQEVNQLREQLDARTWIDGNQTSGMMASTRKRNQQLDKDDPVALQIGELIMARLLAHPLFVSAALPLQFYPPLFNRYQGGDTFGYHIDNAIRSTSDGMVRTDLSATLFLSELNAYEGGELVIQDTYGQQSIKLAAGSLVLYPSTSLHQVTPVTSGERTSAFMWLQSMVRDEGQRRLLFQLDQSIQTLTAQQAAEQELFNLTGVYHNLLRRWSEL.

Residues Q78 to S176 enclose the Fe2OG dioxygenase domain. 3 residues coordinate Fe cation: H96, D98, and H157. R167 contacts 2-oxoglutarate.

It depends on Fe(2+) as a cofactor. L-ascorbate serves as cofactor.

This is PKHD-type hydroxylase SO_3913 from Shewanella oneidensis (strain ATCC 700550 / JCM 31522 / CIP 106686 / LMG 19005 / NCIMB 14063 / MR-1).